A 201-amino-acid chain; its full sequence is Superoxide dismutase [Mn] (201 aa).

The Mn(2+) site is built by His-27, His-81, Asp-163, and His-167.

The protein belongs to the iron/manganese superoxide dismutase family. In terms of assembly, homodimer. Requires Mn(2+) as cofactor.

It carries out the reaction 2 superoxide + 2 H(+) = H2O2 + O2. In terms of biological role, destroys superoxide anion radicals which are normally produced within the cells and which are toxic to biological systems. May play a critical role against oxidative stress, affecting both the survival and the virulence of S.pneumoniae. This Streptococcus pneumoniae serotype 4 (strain ATCC BAA-334 / TIGR4) protein is Superoxide dismutase [Mn] (sodA).